A 144-amino-acid polypeptide reads, in one-letter code: Small ribosomal subunit protein uS19 (144 aa).

Belongs to the universal ribosomal protein uS19 family.

The chain is Small ribosomal subunit protein uS19 (rps15) from Dictyostelium discoideum (Social amoeba).